Here is a 546-residue protein sequence, read N- to C-terminus: Amidophosphoribosyltransferase (546 aa).

The segment covering 1–26 has biased composition (low complexity); sequence MSAPQQQQQSQQKQQQHVRVVEQQQV. Positions 1 to 39 are disordered; it reads MSAPQQQQQSQQKQQQHVRVVEQQQVEPAEAVTSSMESE. The propeptide occupies 1–53; that stretch reads MSAPQQQQQSQQKQQQHVRVVEQQQVEPAEAVTSSMESESISASKELTGLTHE. The Nucleophile role is filled by cysteine 54. A Glutamine amidotransferase type-2 domain is found at 54-302; that stretch reads CGVFGAIACG…PGEIVELSRS (249 aa). At serine 113 the chain carries Phosphoserine. Threonine 114 is subject to Phosphothreonine. Serine 120 bears the Phosphoserine mark. Cysteine 321 contributes to the [4Fe-4S] cluster binding site. The Mg(2+) site is built by serine 368, aspartate 430, and aspartate 431. Residues cysteine 467, cysteine 528, and cysteine 531 each contribute to the [4Fe-4S] cluster site.

In the C-terminal section; belongs to the purine/pyrimidine phosphoribosyltransferase family. Mg(2+) is required as a cofactor. [4Fe-4S] cluster serves as cofactor.

The catalysed reaction is 5-phospho-beta-D-ribosylamine + L-glutamate + diphosphate = 5-phospho-alpha-D-ribose 1-diphosphate + L-glutamine + H2O. The protein operates within purine metabolism; IMP biosynthesis via de novo pathway; N(1)-(5-phospho-D-ribosyl)glycinamide from 5-phospho-alpha-D-ribose 1-diphosphate: step 1/2. Involved in the first step (and regulatory point) of the de novo biosynthesis of purine nucleotides, where it catalyzes the transfer of glutamine amide to 5-phospho-alpha-D-ribose 1-diphosphate. The chain is Amidophosphoribosyltransferase (Prat) from Drosophila melanogaster (Fruit fly).